The chain runs to 404 residues: MAEILERSGYLVKVRVEVPADRVKASYEALLKDLASRVRVPGFRPGKAPLKVVEARLGREALLQDLKERLVEETYPEAVRELGLSPVAARVVEQDLSEGEGFRYVAEVENYPEVRLPDWRSFALEVSPPEVTEEMVEKALEELRQRYAELVPVEREAQEKDHLFVRTEEGAEFPIDLAKALPHVREALLGKKAGDVVMVPVLNDKGEKVREVRTEVLEVKTLKLPELDEEFAKTLEAESLEDLKNRVRESLKRQAERAYEEARERAFLEKLAEGLEVEIPPSMLRAEERHLLEHLAEDLYRQGISLEAYLEALKEKGELEKFQEDLRKEAEKRVRIALAREKLAEELNPEVSEEEWQAYLQAAARAYGVAVQDLRRQFGEEGLARLKERLRQDKAVQEALKALG.

Residues 160–225 (KDHLFVRTEE…VLEVKTLKLP (66 aa)) form the PPIase FKBP-type domain.

It belongs to the FKBP-type PPIase family. Tig subfamily.

It localises to the cytoplasm. It catalyses the reaction [protein]-peptidylproline (omega=180) = [protein]-peptidylproline (omega=0). Its function is as follows. Involved in protein export. Acts as a chaperone by maintaining the newly synthesized protein in an open conformation. Functions as a peptidyl-prolyl cis-trans isomerase. The polypeptide is Trigger factor (Thermus thermophilus (strain ATCC 27634 / DSM 579 / HB8)).